The chain runs to 303 residues: Probable 5-dehydro-4-deoxyglucarate dehydratase (303 aa).

The protein belongs to the DapA family.

It carries out the reaction 5-dehydro-4-deoxy-D-glucarate + H(+) = 2,5-dioxopentanoate + CO2 + H2O. It participates in carbohydrate acid metabolism; D-glucarate degradation; 2,5-dioxopentanoate from D-glucarate: step 2/2. The protein is Probable 5-dehydro-4-deoxyglucarate dehydratase of Pseudomonas putida (strain GB-1).